We begin with the raw amino-acid sequence, 211 residues long: Dihydrofolate reductase (211 aa).

The DHFR domain maps to 7–210; the sequence is PIVGIVACLQ…YCFEFTLYNR (204 aa). Residues alanine 13 and 20–26 contribute to the NADP(+) site; that span reads GIGFRGG. 34–39 is a binding site for substrate; sequence EMKYFR. Position 58-60 (58-60) interacts with NADP(+); that stretch reads RKT. Position 74 (arginine 74) interacts with substrate. NADP(+)-binding positions include 80 to 82 and 123 to 130; these read SRS and GGGEVYSQ.

This sequence belongs to the dihydrofolate reductase family.

It catalyses the reaction (6S)-5,6,7,8-tetrahydrofolate + NADP(+) = 7,8-dihydrofolate + NADPH + H(+). Its pathway is cofactor biosynthesis; tetrahydrofolate biosynthesis; 5,6,7,8-tetrahydrofolate from 7,8-dihydrofolate: step 1/1. Key enzyme in folate metabolism. Catalyzes an essential reaction for de novo glycine and purine synthesis, and for DNA precursor synthesis. This Saccharomyces cerevisiae (strain ATCC 204508 / S288c) (Baker's yeast) protein is Dihydrofolate reductase (DFR1).